A 426-amino-acid polypeptide reads, in one-letter code: Potassium channel subfamily K member 2 (426 aa).

The Cytoplasmic segment spans residues 1–61 (MLASASRERP…SAINVMKWKT (61 aa)). Important for GNG4 binding and L-glutamate release in astrocytes regions lie at residues 17–38 (AAPDLLDPKSAAQNSKPRLSFS) and 51–61 (DSAINVMKWKT). A helical membrane pass occupies residues 62–82 (VSTIFLVVVLYLIIGATVFKA). 2 N-linked (GlcNAc...) asparagine glycosylation sites follow: Asn-110 and Asn-134. The segment at residues 144-170 (LGSSFFFAGTVITTIGFGNISPRTEGG) is an intramembrane region (pore-forming). Residues Thr-157, Ile-158, Gly-159, and Phe-160 each contribute to the K(+) site. The interval 157-162 (TIGFGN) is selectivity filter 1. The chain crosses the membrane as a helical span at residues 172–192 (IFCIIYALLGIPLFGFLLAGV). Residues 193–222 (GDQLGTIFGKGIAKVEDTFIKWNVSQTKIR) are Cytoplasmic-facing. The chain crosses the membrane as a helical span at residues 223-243 (IISTIIFILFGCVLFVALPAV). The segment at residues 253–283 (ALDAIYFVVITLTTIGFGDYVAGGSDIEYLD) is an intramembrane region (pore-forming). Thr-266, Ile-267, Gly-268, and Phe-269 together coordinate K(+). Positions 266 to 271 (TIGFGD) are selectivity filter 2. A helical membrane pass occupies residues 288–308 (VVWFWILVGLAYFAAVLSMIG). Residues 309 to 426 (DWLRVISKKT…EDIAVIENMK (118 aa)) are Cytoplasmic-facing. An interaction with AKAP5 region spans residues 313 to 326 (VISKKTKEEVGEFR). Positions 337-385 (TAEFKETRRRLSVEIYDKFQRATSVKRKLSAELAGNHNQELTPCRRTLS) are essential for chloroform and halothane sensitivity. Ser-348 is subject to Phosphoserine; by PKA.

The protein belongs to the two pore domain potassium channel (TC 1.A.1.8) family. As to quaternary structure, homodimer; disulfide-linked. Forms heterodimers with other 2-pore domain K(+) channel subunits, such as KCNK1, KCNK4, KCNK10 and KCNK18. Interacts with AKAP5; the channel is recruited to postsynaptic microdomains by AKAP5 where it can integrate neurotransmitter receptor signals. Part of a complex composed of AKAP5 and ADRB2. Upon AKAP5 binding, the channel is no longer sensitive to intracellular acidification, membrane stretch or arachidonic acid stimuli. Interacts with POPDC1; the interaction enhances KCNK2 surface expression and is inhibited by cAMP. Interacts (via N-terminus) with G-protein subunit GNG4 (via C-terminus); this interaction confers ion selectivity to L-glutamate and Cl(-) anions. Post-translationally, phosphorylation at Ser-348 controls the reversible conversion from a leak channel to a voltage-dependent channel. As to expression, expressed in cardiomyocytes (at protein level). Expressed in various brain regions including the lateral olfactory tract, piriform cortex of the forebrain, paraventricular and anteromedial thalamic nuclei, brainstem, caudate putamen, nucleus accumbens, neocortex and interpeduncular nucleus. Detected in astrocytes in hippocampus stratum radiatum. Expressed in brain and kidney.

Its subcellular location is the cell membrane. The protein resides in the endoplasmic reticulum membrane. It localises to the cell projection. The protein localises to the axon. It is found in the dendrite. Its subcellular location is the postsynaptic density membrane. The protein resides in the sarcolemma. The enzyme catalyses K(+)(in) = K(+)(out). It carries out the reaction L-glutamate(out) = L-glutamate(in). The catalysed reaction is chloride(in) = chloride(out). It catalyses the reaction Rb(+)(in) = Rb(+)(out). The enzyme catalyses Cs(+)(in) = Cs(+)(out). With respect to regulation, activated by various stimuli including intracellular acidic pH, mechanical stretch and polyunsaturated fatty acids such as arachidonic acid. K(+) channel that conducts voltage-dependent outward rectifying currents upon membrane depolarization. Voltage sensing is coupled to K(+) electrochemical gradient in an 'ion flux gating' mode where outward but not inward ion flow opens the gate. Converts to voltage-independent 'leak' conductance mode upon stimulation by various stimuli including mechanical membrane stretch, acidic pH, heat and lipids. Reversibly converts between a voltage-insensitive K(+) 'leak' channel and a voltage-dependent outward rectifying K(+) channel in a phosphorylation-dependent manner. Homo- and heterodimerizes to form functional channels with distinct regulatory and gating properties. In trigeminal ganglia sensory neurons, the heterodimer of KCNK2/TREK-1 and KCNK18/TRESK inhibits neuronal firing and neurogenic inflammation by stabilizing the resting membrane potential at K(+) equilibrium potential as well as by regulating the threshold of action potentials and the spike frequency. At trigeminal A-beta afferent nerves, the heterodimer of KCNK2/TREK-1 and KCNK4/TRAAK is mostly coexpressed at nodes of Ranvier where it conducts voltage-independent mechanosensitive and thermosensitive currents, allowing rapid action potential repolarization, high speed and high frequence saltatory conduction on myelinated nerves to ensure prompt sensory responses. In hippocampal astrocytes, the heterodimer of KCNK2/TREK-1 and KCNK1/TWIK-1 allows passive K(+) conductance under basal conditions, but changes ion selectivity and becomes permeable to L-glutamate and Cl(-) ions upon binding to G-protein subunit GNG4 in stimulated astrocytes. Mediates rapid L-glutamate release in response to activation of G-protein-coupled receptors such as F2R and CNR1. In hippocampal pyramidal neurons, the homodimer of KCNK2/TREK-1 contributes to gamma-aminobutyric acid (GABA) B-induced slow inhibitory postsynaptic potential. Associates with AKAP5 and Gs-protein-coupled receptor B2AR at postsynaptic dense bodies and converts to a leak channel no longer sensitive to stimulation by arachidonic acid, acidic pH or mechanical stress, nor inhibited by Gq-coupled receptors but still under the negative control of Gs-coupled receptors. Permeable to other monovalent cations such as Rb(+) and Cs(+). In terms of biological role, does not display channel activity but reduces the channel activity of isoform 1, isoform 2 and isoform 4 and reduces cell surface expression of isoform 2. This chain is Potassium channel subfamily K member 2, found in Rattus norvegicus (Rat).